A 494-amino-acid chain; its full sequence is UDP-N-acetylmuramoyl-L-alanyl-D-glutamate--L-lysine ligase (494 aa).

Residue S30 participates in UDP-N-acetyl-alpha-D-muramoyl-L-alanyl-D-glutamate binding. An ATP-binding site is contributed by 110–116; the sequence is GTNGKTS. Residues 152–153, S179, and R187 each bind UDP-N-acetyl-alpha-D-muramoyl-L-alanyl-D-glutamate; that span reads TT. K219 is subject to N6-carboxylysine. Positions 406–409 match the L-lysine recognition motif motif; the sequence is DNPA.

The protein belongs to the MurCDEF family. MurE subfamily. In terms of processing, carboxylation is probably crucial for Mg(2+) binding and, consequently, for the gamma-phosphate positioning of ATP.

The protein localises to the cytoplasm. It catalyses the reaction UDP-N-acetyl-alpha-D-muramoyl-L-alanyl-D-glutamate + L-lysine + ATP = UDP-N-acetyl-alpha-D-muramoyl-L-alanyl-gamma-D-glutamyl-L-lysine + ADP + phosphate + H(+). The protein operates within cell wall biogenesis; peptidoglycan biosynthesis. In terms of biological role, catalyzes the addition of L-lysine to the nucleotide precursor UDP-N-acetylmuramoyl-L-alanyl-D-glutamate (UMAG) in the biosynthesis of bacterial cell-wall peptidoglycan. In Staphylococcus epidermidis (strain ATCC 35984 / DSM 28319 / BCRC 17069 / CCUG 31568 / BM 3577 / RP62A), this protein is UDP-N-acetylmuramoyl-L-alanyl-D-glutamate--L-lysine ligase.